Here is an 810-residue protein sequence, read N- to C-terminus: Hemoglobin-haptoglobin utilization protein B (810 aa).

The N-terminal stretch at 1–22 (MPIPFKPVLAVAAIAQAFPAFA) is a signal peptide. One can recognise a TBDR plug domain in the interval 34–166 (NEITVTGTHK…LGGAVNYQTK (133 aa)). Positions 175–810 (DKPYHLGIKG…SYNFTIEAKF (636 aa)) constitute a TBDR beta-barrel domain. The TonB C-terminal box motif lies at 793–810 (QRFTSPGRSYNFTIEAKF).

This sequence belongs to the TonB-dependent receptor family.

The protein resides in the cell outer membrane. Acts as a receptor for hemoglobin or the hemoglobin/haptoglobin complex and is required for heme uptake. In Neisseria meningitidis serogroup C, this protein is Hemoglobin-haptoglobin utilization protein B (hpuB).